The following is a 1324-amino-acid chain: Sal-like protein 1 (1324 aa).

The segment at 1 to 42 is disordered; sequence MSRRKQAKPQHFQSDPEVASLPRRDGDTEKGQPSRPTKSKDA. Residues 22–42 show a composition bias toward basic and acidic residues; the sequence is PRRDGDTEKGQPSRPTKSKDA. Residues 43–65 form a C2H2-type 1; atypical zinc finger; sequence HVCGRCCAEFFELSDLLLHKKNC. Disordered stretches follow at residues 77 to 102, 108 to 127, 132 to 172, and 317 to 336; these read NPAS…NDTV, VDCS…SMEV, ANKS…TSAI, and PPIQ…SNSG. Basic and acidic residues predominate over residues 113 to 124; that stretch reads LSEHNGLDREES. Low complexity predominate over residues 135–158; it reads SGSGTSSGSHSSTAPSSSSSSSSS. Positions 321 to 336 are enriched in polar residues; the sequence is LPQSSSGNTIIPSNSG. A Glycyl lysine isopeptide (Lys-Gly) (interchain with G-Cter in SUMO2) cross-link involves residue Lys-439. 2 consecutive C2H2-type zinc fingers follow at residues 449 to 471 and 477 to 499; these read HKCR…LRSH and FKCN…FQRH. The segment at 577–646 is disordered; it reads PIPISHSATS…ASSSVLSSPA (70 aa). A phosphoserine mark is found at Ser-590, Ser-593, and Ser-595. The span at 633-646 shows a compositional bias: low complexity; it reads SVPTASSSVLSSPA. Glycyl lysine isopeptide (Lys-Gly) (interchain with G-Cter in SUMO2) cross-links involve residues Lys-673, Lys-690, and Lys-701. 3 consecutive C2H2-type zinc fingers follow at residues 706 to 728, 734 to 756, and 766 to 788; these read NECI…YRTH, FKCK…YSVH, and HSCP…IRMH. Disordered stretches follow at residues 790–856 and 894–963; these read GGQI…SSPL and EGDV…LSPT. The segment covering 802–811 has biased composition (polar residues); sequence YSESMESDTG. Positions 820–833 are enriched in acidic residues; it reads DLDNFSDENMEDCP. The segment covering 843–856 has biased composition (low complexity); the sequence is SADASQDSLSSSPL. The segment covering 899-936 has biased composition (polar residues); sequence TNDSSSVGGDMESQSAGSPAISESTSSMQALSPSNSTQ. Basic and acidic residues predominate over residues 937–949; the sequence is EFHKSPSIEEKPQ. 2 positions are modified to phosphoserine: Ser-941 and Ser-943. Residues Lys-947 and Lys-982 each participate in a glycyl lysine isopeptide (Lys-Gly) (interchain with G-Cter in SUMO2) cross-link. 2 C2H2-type zinc fingers span residues 1001 to 1023 and 1029 to 1051; these read TACD…YRSH and FICT…MLTH. Lys-1086 is covalently cross-linked (Glycyl lysine isopeptide (Lys-Gly) (interchain with G-Cter in SUMO2)). The interval 1095 to 1120 is disordered; that stretch reads VSPQDSKDTPTSHVPSGPLSSSATSP. The span at 1105–1119 shows a compositional bias: polar residues; sequence TSHVPSGPLSSSATS. C2H2-type zinc fingers lie at residues 1134 to 1156 and 1162 to 1184; these read HYCN…ERTH and FACT…MGTH. Glycyl lysine isopeptide (Lys-Gly) (interchain with G-Cter in SUMO2) cross-links involve residues Lys-1219, Lys-1299, and Lys-1319.

This sequence belongs to the sal C2H2-type zinc-finger protein family. May associate with NuRD histone deacetylase complex (HDAC). Interacts with components of HDAC complex including HDAC1, HDAC2, RBBP4, RBPP7, MTA1 and MTA2. Interacts with CCNQ. Interacts with NSD2 (via PHD-type zinc fingers 1, 2 and 3). In terms of tissue distribution, highest levels in kidney. Lower levels in adult brain (enriched in corpus callosum, lower expression in substantia nigra) and liver.

It is found in the nucleus. In terms of biological role, transcriptional repressor involved in organogenesis. Plays an essential role in ureteric bud invasion during kidney development. The chain is Sal-like protein 1 (SALL1) from Homo sapiens (Human).